We begin with the raw amino-acid sequence, 224 residues long: Deoxyribose-phosphate aldolase (224 aa).

The active-site Proton donor/acceptor is aspartate 98. The Schiff-base intermediate with acetaldehyde role is filled by lysine 159. Residue lysine 189 is the Proton donor/acceptor of the active site.

This sequence belongs to the DeoC/FbaB aldolase family. DeoC type 1 subfamily.

The protein resides in the cytoplasm. The catalysed reaction is 2-deoxy-D-ribose 5-phosphate = D-glyceraldehyde 3-phosphate + acetaldehyde. Its pathway is carbohydrate degradation; 2-deoxy-D-ribose 1-phosphate degradation; D-glyceraldehyde 3-phosphate and acetaldehyde from 2-deoxy-alpha-D-ribose 1-phosphate: step 2/2. Catalyzes a reversible aldol reaction between acetaldehyde and D-glyceraldehyde 3-phosphate to generate 2-deoxy-D-ribose 5-phosphate. The chain is Deoxyribose-phosphate aldolase from Methanothermobacter thermautotrophicus (strain ATCC 29096 / DSM 1053 / JCM 10044 / NBRC 100330 / Delta H) (Methanobacterium thermoautotrophicum).